We begin with the raw amino-acid sequence, 276 residues long: Phosphonates import ATP-binding protein PhnC (276 aa).

The region spanning 5 to 253 (IRVERLNKTF…LLNDLYGADL (249 aa)) is the ABC transporter domain. An ATP-binding site is contributed by 37–44 (GASGSGKS).

It belongs to the ABC transporter superfamily. Phosphonates importer (TC 3.A.1.9.1) family. The complex is composed of two ATP-binding proteins (PhnC), two transmembrane proteins (PhnE) and a solute-binding protein (PhnD).

The protein resides in the cell inner membrane. It catalyses the reaction phosphonate(out) + ATP + H2O = phosphonate(in) + ADP + phosphate + H(+). Its function is as follows. Part of the ABC transporter complex PhnCDE involved in phosphonates import. Responsible for energy coupling to the transport system. This is Phosphonates import ATP-binding protein PhnC from Stutzerimonas stutzeri (Pseudomonas stutzeri).